Reading from the N-terminus, the 515-residue chain is ADP,ATP carrier protein 1 (515 aa).

Helical transmembrane passes span L24–L44, A62–Y82, A93–I113, E124–L144, F149–W169, F184–V204, L226–N246, Y286–V306, F329–I349, A358–F378, S383–I403, and I465–V485.

It belongs to the ADP/ATP translocase tlc family.

The protein resides in the cell membrane. The protein is ADP,ATP carrier protein 1 (tlcA) of Chlamydia pneumoniae (Chlamydophila pneumoniae).